The chain runs to 701 residues: MNPVIKKFQFGQSTVTLETGRIARQASGAVLVTVDDDVSVLVTVVGAKQADAGKGFFPLSVHYQEKTYAAGKIPGGFFKREGRPSEKETLTSRLIDRPIRPLFPEGFMNEVQVVCTVVSTSKKIDPDIAAMIGTSAALAISGIPFDGPVGAARVAFHESTGYLLNPTYEQLQASSLDMVVAGTSEAVLMVESEAKELTEDQMLGAVLFAHDEFQVVINAIKELAAEAAKPVWDWQPKPEATALLGAIRAEFGDAISQAYTITVKADRYARLGELKDQVVAKLAVEEGSPSASEVKAAFGEIEYRTVRENIVNGKPRIDGRDTRTVRPLNIEVGVLPKTHGSALFTRGETQALVVATLGTARDAQLLDTLEGEKKDPFMLHYNFPPFSVGECGRMGGAGRREIGHGRLARRSVQAMLPGADVFPYTIRVVSEITESNGSSSMASVCGASLALMDAGVPMKAPVAGIAMGLVKEGEKFAILTDILGDEDHLGDMDFKVAGTSKGVTALQMDIKIKGITEEIMEIALGQALEARLNILGQMNQIIGQSRNELSANAPTMIAMKIDTDKIRDVIGKGGATIRAICEETKASIDIEDDGSIKIFGESKEAAEAARQRVLGITAEAEIGKIYVGKVERIVDFGAFVNILPGKDGLVHISMLSDARVEKVTDILKEGQEVEVLVLDVDNRGRIKLSIKDVAAAKASGV.

Asp487 and Asp493 together coordinate Mg(2+). The region spanning Pro554 to Val613 is the KH domain. The S1 motif domain occupies Gly623–Lys691.

This sequence belongs to the polyribonucleotide nucleotidyltransferase family. Component of the RNA degradosome, which is a multiprotein complex involved in RNA processing and mRNA degradation. Mg(2+) is required as a cofactor.

The protein localises to the cytoplasm. The enzyme catalyses RNA(n+1) + phosphate = RNA(n) + a ribonucleoside 5'-diphosphate. Functionally, involved in mRNA degradation. Catalyzes the phosphorolysis of single-stranded polyribonucleotides processively in the 3'- to 5'-direction. In Pseudomonas savastanoi pv. phaseolicola (strain 1448A / Race 6) (Pseudomonas syringae pv. phaseolicola (strain 1448A / Race 6)), this protein is Polyribonucleotide nucleotidyltransferase.